Reading from the N-terminus, the 434-residue chain is Histidinol dehydrogenase (434 aa).

Positions 130, 188, and 211 each coordinate NAD(+). S237, Q259, and H262 together coordinate substrate. Zn(2+)-binding residues include Q259 and H262. Residues E326 and H327 each act as proton acceptor in the active site. The substrate site is built by H327, D360, E414, and H419. D360 provides a ligand contact to Zn(2+). H419 provides a ligand contact to Zn(2+).

Belongs to the histidinol dehydrogenase family. As to quaternary structure, homodimer. Requires Zn(2+) as cofactor.

The catalysed reaction is L-histidinol + 2 NAD(+) + H2O = L-histidine + 2 NADH + 3 H(+). Its pathway is amino-acid biosynthesis; L-histidine biosynthesis; L-histidine from 5-phospho-alpha-D-ribose 1-diphosphate: step 9/9. Functionally, catalyzes the sequential NAD-dependent oxidations of L-histidinol to L-histidinaldehyde and then to L-histidine. This Escherichia coli O6:H1 (strain CFT073 / ATCC 700928 / UPEC) protein is Histidinol dehydrogenase.